The following is a 650-amino-acid chain: DNA topoisomerase 3 (650 aa).

Residues 1-134 (MRLFIAEKPS…KLNQIQRCLI (134 aa)) enclose the Toprim domain. Mg(2+) contacts are provided by glutamate 7, aspartate 103, and aspartate 105. In terms of domain architecture, Topo IA-type catalytic spans 155–617 (FIPLATSALA…TLTNFLPELM (463 aa)). Residues 194-199 (SVGRVQ) are interaction with DNA. Catalysis depends on tyrosine 342, which acts as the O-(5'-phospho-DNA)-tyrosine intermediate.

It belongs to the type IA topoisomerase family. Requires Mg(2+) as cofactor.

It catalyses the reaction ATP-independent breakage of single-stranded DNA, followed by passage and rejoining.. Its function is as follows. Releases the supercoiling and torsional tension of DNA, which is introduced during the DNA replication and transcription, by transiently cleaving and rejoining one strand of the DNA duplex. Introduces a single-strand break via transesterification at a target site in duplex DNA. The scissile phosphodiester is attacked by the catalytic tyrosine of the enzyme, resulting in the formation of a DNA-(5'-phosphotyrosyl)-enzyme intermediate and the expulsion of a 3'-OH DNA strand. The free DNA strand then undergoes passage around the unbroken strand, thus removing DNA supercoils. Finally, in the religation step, the DNA 3'-OH attacks the covalent intermediate to expel the active-site tyrosine and restore the DNA phosphodiester backbone. This chain is DNA topoisomerase 3, found in Pasteurella multocida (strain Pm70).